The following is a 245-amino-acid chain: Ribosomal protein L11 methyltransferase (245 aa).

S-adenosyl-L-methionine is bound by residues T101, G122, D144, and N184.

It belongs to the methyltransferase superfamily. PrmA family.

It is found in the cytoplasm. The enzyme catalyses L-lysyl-[protein] + 3 S-adenosyl-L-methionine = N(6),N(6),N(6)-trimethyl-L-lysyl-[protein] + 3 S-adenosyl-L-homocysteine + 3 H(+). Its function is as follows. Methylates ribosomal protein L11. The chain is Ribosomal protein L11 methyltransferase from Aquifex aeolicus (strain VF5).